The following is a 156-amino-acid chain: Small ribosomal subunit protein uS7 (156 aa).

It belongs to the universal ribosomal protein uS7 family. As to quaternary structure, part of the 30S ribosomal subunit. Contacts proteins S9 and S11.

One of the primary rRNA binding proteins, it binds directly to 16S rRNA where it nucleates assembly of the head domain of the 30S subunit. Is located at the subunit interface close to the decoding center, probably blocks exit of the E-site tRNA. The sequence is that of Small ribosomal subunit protein uS7 from Vibrio campbellii (strain ATCC BAA-1116).